A 741-amino-acid polypeptide reads, in one-letter code: NAD(P)H-quinone oxidoreductase subunit 5, chloroplastic (741 aa).

The next 16 helical transmembrane spans lie at 9-29 (WIIP…LLLF), 40-60 (WAFQ…NLSI), 89-109 (IDPL…MVLI), 125-145 (FAYM…SNLI), 147-167 (IYIF…FWFT), 185-205 (GDFG…SFEF), 219-239 (NEVN…GAIA), 258-278 (TPIS…FLVA), 283-303 (LFIV…ITVF), 327-347 (LGYM…FHLI), 354-374 (ALLF…VGYC), 396-416 (NSFL…CFWS), 425-445 (WLYS…TAFY), 549-569 (LFPI…GIPF), 605-625 (FFSV…YKPV), and 721-741 (YLFF…FFNL).

Belongs to the complex I subunit 5 family. NDH is composed of at least 16 different subunits, 5 of which are encoded in the nucleus.

The protein localises to the plastid. It is found in the chloroplast thylakoid membrane. The enzyme catalyses a plastoquinone + NADH + (n+1) H(+)(in) = a plastoquinol + NAD(+) + n H(+)(out). It catalyses the reaction a plastoquinone + NADPH + (n+1) H(+)(in) = a plastoquinol + NADP(+) + n H(+)(out). In terms of biological role, NDH shuttles electrons from NAD(P)H:plastoquinone, via FMN and iron-sulfur (Fe-S) centers, to quinones in the photosynthetic chain and possibly in a chloroplast respiratory chain. The immediate electron acceptor for the enzyme in this species is believed to be plastoquinone. Couples the redox reaction to proton translocation, and thus conserves the redox energy in a proton gradient. In Cichorium intybus (Chicory), this protein is NAD(P)H-quinone oxidoreductase subunit 5, chloroplastic (ndhF).